Here is a 611-residue protein sequence, read N- to C-terminus: UvrABC system protein C (611 aa).

The GIY-YIG domain occupies 12 to 96 (DQPGIYQYFD…IKQLKPKYNI (85 aa)). In terms of domain architecture, UVR spans 202-237 (EKILEILNQKMQKYAENLQFEEAAEIRDRIKSIESA).

Belongs to the UvrC family. Interacts with UvrB in an incision complex.

It localises to the cytoplasm. Functionally, the UvrABC repair system catalyzes the recognition and processing of DNA lesions. UvrC both incises the 5' and 3' sides of the lesion. The N-terminal half is responsible for the 3' incision and the C-terminal half is responsible for the 5' incision. The chain is UvrABC system protein C from Nautilia profundicola (strain ATCC BAA-1463 / DSM 18972 / AmH).